Reading from the N-terminus, the 656-residue chain is Methionine--tRNA ligase (656 aa).

The 'HIGH' region signature appears at 11–21; that stretch reads YYVNDIPHIGH. The Zn(2+) site is built by Cys-126, Cys-129, Cys-147, and Cys-150. A 'KMSKS' region motif is present at residues 301 to 305; that stretch reads KMSKS. An ATP-binding site is contributed by Lys-304. A tRNA-binding domain is found at 555–656; it reads DFKKVEIKVG…REKIAGSLIS (102 aa).

The protein belongs to the class-I aminoacyl-tRNA synthetase family. MetG type 2A subfamily. In terms of assembly, homodimer. Requires Zn(2+) as cofactor.

The protein resides in the cytoplasm. The enzyme catalyses tRNA(Met) + L-methionine + ATP = L-methionyl-tRNA(Met) + AMP + diphosphate. Its function is as follows. Is required not only for elongation of protein synthesis but also for the initiation of all mRNA translation through initiator tRNA(fMet) aminoacylation. The polypeptide is Methionine--tRNA ligase (metG) (Helicobacter pylori (strain J99 / ATCC 700824) (Campylobacter pylori J99)).